A 316-amino-acid polypeptide reads, in one-letter code: CXXC-type zinc finger protein 5 (316 aa).

Positions 1–10 (MSSLGGGSQD) are enriched in gly residues. The disordered stretch occupies residues 1–95 (MSSLGGGSQD…SGGAGSMMGG (95 aa)). Low complexity-rich tracts occupy residues 11 to 27 (AGGS…SGSG) and 36 to 50 (SATV…VADD). Residues 250 to 291 (GKKKRKRCGMCAPCRRRINCEQCSSCRNRKTGHQICKFRKCE) form a CXXC-type zinc finger. The Nuclear localization signal motif lies at 251 to 256 (KKKRKR). Zn(2+) contacts are provided by Cys257, Cys260, Cys263, Cys269, Cys272, Cys275, Cys285, and Cys290.

Interacts with DVL1. Interacts with RBPJ. In terms of tissue distribution, expressed in neural stem cells (at protein level). Expressed in the dorsal telencephalon.

Its subcellular location is the nucleus. The protein localises to the cytoplasm. May indirectly participate in activation of the NF-kappa-B and MAPK pathways. Required for DNA damage-induced ATM phosphorylation, p53 activation and cell cycle arrest. Involved in myelopoiesis. Acts as a mediator of BMP4-mediated modulation of canonical Wnt signaling activity in neural stem cells. Binds to the oxygen responsive element of COX4I2 and represses its transcription under hypoxia conditions (4% oxygen), as well as normoxia conditions (20% oxygen). May repress COX4I2 transactivation induced by CHCHD2 and RBPJ. Binds preferentially to DNA containing cytidine-phosphate-guanosine (CpG) dinucleotides over CpH (H=A, T, and C), hemimethylated-CpG and hemimethylated-hydroxymethyl-CpG. The sequence is that of CXXC-type zinc finger protein 5 (Cxxc5) from Rattus norvegicus (Rat).